Here is a 351-residue protein sequence, read N- to C-terminus: Histidine protein kinase SaeS (351 aa).

Transmembrane regions (helical) follow at residues 9 to 29 (IIIG…IAYI) and 40 to 60 (TLTL…SIFI). One can recognise an HAMP domain in the interval 61 to 114 (NPLIQKIKQFNIKTKQFANGNYASNDKTFNSPKEIYELNQSFNKMASEITQQMN). The Histidine kinase domain occupies 129 to 348 (NLAHDLKTPL…TMTVTLHKLD (220 aa)). At histidine 132 the chain carries Phosphohistidine; by autocatalysis.

Autophosphorylated.

The protein resides in the cell membrane. It catalyses the reaction ATP + protein L-histidine = ADP + protein N-phospho-L-histidine.. Functionally, member of the two-component regulatory system SaeR/SaeS involved in the regulation of staphylococcal virulence factors in a strain-dependent fashion. Probably functions as a membrane-associated protein kinase that upon sensing the appropriate signal, autophosphorylates and in turn activates the cytosolic response regulator SaeR. The chain is Histidine protein kinase SaeS (saeS) from Staphylococcus aureus (strain USA300).